Reading from the N-terminus, the 159-residue chain is E3 ubiquitin ligase complex SCF subunit sconC (159 aa).

The tract at residues 101-159 (ILAANYLDIKALLDVGCKTVANMIKGKSPEEIRKTFNIQNDFTPEEEDQIRRENEWAEE) is interaction with the F-box domain of F-box proteins.

This sequence belongs to the SKP1 family. Component of the SCF (SKP1-CUL1-F-box protein) E3 ubiquitin ligase complexes.

It functions in the pathway protein modification; protein ubiquitination. Functionally, essential component of the SCF (SKP1-CUL1-F-box protein) E3 ubiquitin ligase complexes, which mediate the ubiquitination and subsequent proteasomal degradation of target proteins. Controls sulfur metabolite repression, probably by mediating the inactivation or degradation of the metR transcription factor. The chain is E3 ubiquitin ligase complex SCF subunit sconC (sconC) from Aspergillus clavatus (strain ATCC 1007 / CBS 513.65 / DSM 816 / NCTC 3887 / NRRL 1 / QM 1276 / 107).